The chain runs to 474 residues: Phosphatidylserine synthase 2 (474 aa).

Residues 1 to 62 are Lumenal-facing; the sequence is MLRSDVRRVA…DDGTNTFFWR (62 aa). A helical membrane pass occupies residues 63 to 83; sequence AHTLTVLFILTCSLGYVTLLE. The Cytoplasmic segment spans residues 84–96; sequence ETPQDTAYNAKRG. A helical transmembrane segment spans residues 97–117; sequence IIASILVFLCFGVTQAKDGPF. Residues 118 to 126 lie on the Lumenal side of the membrane; sequence SRPHPAYWR. The chain crosses the membrane as a helical span at residues 127-147; sequence FWLCVSVVYELFLIFILFQTV. The Cytoplasmic portion of the chain corresponds to 148 to 313; it reads HDGRQFMKFI…EWKPASSLRR (166 aa). Residues 314 to 334 form a helical membrane-spanning segment; it reads WLAVCGIIFVFLLAELNTFYL. A topological domain (lumenal) is located at residue Lys-335. The helical transmembrane segment at 336–356 threads the bilayer; it reads FVLWMPPEHYLVLLRLVFFVN. At 357–376 the chain is on the cytoplasmic side; it reads VGGVAMREIYDFMDDLKFHK. The helical transmembrane segment at 377–397 threads the bilayer; it reads KLGQQAWMVAAITVTEFLIVV. Over 398–403 the chain is Lumenal; it reads KYDPYT. A helical membrane pass occupies residues 404 to 424; it reads ITLPLPFYVTQCWILGIVLVL. Topologically, residues 425–474 are cytoplasmic; that stretch reads TWTVWRFFIRDITLRYKEIRQQKQHRNEEEKSHRNGDVNSEKDTNKHKKH. The span at 448 to 468 shows a compositional bias: basic and acidic residues; the sequence is QHRNEEEKSHRNGDVNSEKDT. The disordered stretch occupies residues 448–474; the sequence is QHRNEEEKSHRNGDVNSEKDTNKHKKH.

This sequence belongs to the phosphatidyl serine synthase family.

The protein resides in the endoplasmic reticulum membrane. It carries out the reaction a 1,2-diacyl-sn-glycero-3-phosphoethanolamine + L-serine = a 1,2-diacyl-sn-glycero-3-phospho-L-serine + ethanolamine. It catalyses the reaction 1-hexadecanoyl-2-(9Z-octadecenoyl)-sn-glycero-3-phosphoethanolamine + L-serine = 1-hexadecanoyl-2-(9Z-octadecenoyl)-sn-glycero-3-phospho-L-serine + ethanolamine. The catalysed reaction is 1-hexadecanoyl-2-(4Z,7Z,10Z,13Z,16Z,19Z-docosahexaenoyl)-sn-glycero-3-phosphoethanolamine + L-serine = 1-hexadecanoyl-2-(4Z,7Z,10Z,13Z,16Z,19Z-docosahexaenoyl)-sn-glycero-3-phosphoserine + ethanolamine. The enzyme catalyses 1-octadecanoyl-2-(5Z,8Z,11Z,14Z)-eicosatetraenoyl-sn-glycero-3-phosphoethanolamine + L-serine = 1-octadecanoyl-2-(5Z,8Z,11Z,14Z)-eicosatetraenoyl-sn-glycero-3-phosphoserine + ethanolamine. It carries out the reaction 1-octadecanoyl-2-(4Z,7Z,10Z,13Z,16Z,19Z-docosahexaenoyl)-sn-glycero-3-phosphoethanolamine + L-serine = 1-octadecanoyl-2-(4Z,7Z,10Z,13Z,16Z,19Z-docosahexaenoyl)-sn-glycero-3-phosphoserine + ethanolamine. It catalyses the reaction 1-(1Z-octadecenyl)-2-(4Z,7Z,10Z,13Z,16Z,19Z-docosahexaenoyl)-sn-glycero-3-phosphoethanolamine + L-serine = 1-(1Z-octadecenyl)-2-(4Z,7Z,10Z,13Z,16Z,19Z-docosahexaenoyl)-sn-glycero-3-phospho-L-serine + ethanolamine. The catalysed reaction is 1-octadecanoyl-2-(9Z-octadecenoyl)-sn-glycero-3-phosphoethanolamine + L-serine = 1-octadecanoyl-2-(9Z-octadecenoyl)-sn-glycero-3-phospho-L-serine + ethanolamine. The enzyme catalyses 1-(1Z-octadecenyl)-2-(9Z-octadecenoyl)-sn-glycero-3-phosphoethanolamine + L-serine = 1-(1Z-octadecenyl)-2-(9Z-octadecenoyl)-sn-glycero-3-phospho-L-serine + ethanolamine. It carries out the reaction 1-(1Z-octadecenyl)-2-(5Z,8Z,11Z,14Z- eicosatetraenoyl)-sn-glycero-3-phosphoethanolamine + L-serine = 1-(1Z-octadecenyl)-2-(5Z,8Z,11Z,14Z-eicosatetraenoyl)-sn-glycero-3-phospho-L-serine + ethanolamine. The protein operates within phospholipid metabolism; phosphatidylserine biosynthesis. Functionally, catalyzes a base-exchange reaction in which the polar head group of phosphatidylethanolamine (PE) or phosphatidylcholine (PC) is replaced by L-serine. Catalyzes the conversion of phosphatatidylethanolamine and does not act on phosphatidylcholine. Can utilize both phosphatidylethanolamine (PE) plasmalogen and diacyl PE as substrate and the latter is six times better utilized, indicating the importance of an ester linkage at the sn-1 position. Although it shows no sn-1 fatty acyl preference, exhibits significant preference towards docosahexaenoic acid (22:6n-3) compared with 18:1 or 20:4 at the sn-2 position. In Xenopus tropicalis (Western clawed frog), this protein is Phosphatidylserine synthase 2 (ptdss2).